We begin with the raw amino-acid sequence, 190 residues long: MRIAGIILAGGQGRRMGREKALVPLSGVPLIARVLALAPQVEAVAISANGDPGRFGLGLPVLPDRPGESGLGPMAGIRAGLDWAAGIGAEALVSTATDTPFLPEDLVERLAAAAPAHAQSFGRDHYTAALWRVATVPRIDALFAADERRIARLSGGAVAVPFDTTPDPFANLNTPEDLARAEDRLRQNAP.

Residues 8 to 10, lysine 20, aspartate 64, and aspartate 98 contribute to the GTP site; that span reads LAG. Residue aspartate 98 coordinates Mg(2+).

The protein belongs to the MobA family. In terms of assembly, monomer. Requires Mg(2+) as cofactor.

It localises to the cytoplasm. It carries out the reaction Mo-molybdopterin + GTP + H(+) = Mo-molybdopterin guanine dinucleotide + diphosphate. Its function is as follows. Transfers a GMP moiety from GTP to Mo-molybdopterin (Mo-MPT) cofactor (Moco or molybdenum cofactor) to form Mo-molybdopterin guanine dinucleotide (Mo-MGD) cofactor. In Rhodobacter capsulatus (Rhodopseudomonas capsulata), this protein is Molybdenum cofactor guanylyltransferase.